The primary structure comprises 356 residues: Histidinol-phosphate aminotransferase (356 aa).

Lys-210 is modified (N6-(pyridoxal phosphate)lysine).

Belongs to the class-II pyridoxal-phosphate-dependent aminotransferase family. Histidinol-phosphate aminotransferase subfamily. Homodimer. It depends on pyridoxal 5'-phosphate as a cofactor.

It carries out the reaction L-histidinol phosphate + 2-oxoglutarate = 3-(imidazol-4-yl)-2-oxopropyl phosphate + L-glutamate. It participates in amino-acid biosynthesis; L-histidine biosynthesis; L-histidine from 5-phospho-alpha-D-ribose 1-diphosphate: step 7/9. The sequence is that of Histidinol-phosphate aminotransferase (hisC) from Acetobacter pasteurianus (Acetobacter turbidans).